Here is a 338-residue protein sequence, read N- to C-terminus: Ketol-acid reductoisomerase (NADP(+)) (338 aa).

The KARI N-terminal Rossmann domain maps to 1 to 181 (MQIYYDKDAD…GGGRAGIIET (181 aa)). NADP(+)-binding positions include 24 to 27 (YGSQ), R47, S50, S52, and 82 to 85 (DEHQ). Residue H107 is part of the active site. G133 contributes to the NADP(+) binding site. In terms of domain architecture, KARI C-terminal knotted spans 182 to 327 (TFREETETDL…ARLRDMMPWI (146 aa)). D190, E194, E226, and E230 together coordinate Mg(2+). S251 is a substrate binding site.

The protein belongs to the ketol-acid reductoisomerase family. It depends on Mg(2+) as a cofactor.

The enzyme catalyses (2R)-2,3-dihydroxy-3-methylbutanoate + NADP(+) = (2S)-2-acetolactate + NADPH + H(+). The catalysed reaction is (2R,3R)-2,3-dihydroxy-3-methylpentanoate + NADP(+) = (S)-2-ethyl-2-hydroxy-3-oxobutanoate + NADPH + H(+). Its pathway is amino-acid biosynthesis; L-isoleucine biosynthesis; L-isoleucine from 2-oxobutanoate: step 2/4. The protein operates within amino-acid biosynthesis; L-valine biosynthesis; L-valine from pyruvate: step 2/4. In terms of biological role, involved in the biosynthesis of branched-chain amino acids (BCAA). Catalyzes an alkyl-migration followed by a ketol-acid reduction of (S)-2-acetolactate (S2AL) to yield (R)-2,3-dihydroxy-isovalerate. In the isomerase reaction, S2AL is rearranged via a Mg-dependent methyl migration to produce 3-hydroxy-3-methyl-2-ketobutyrate (HMKB). In the reductase reaction, this 2-ketoacid undergoes a metal-dependent reduction by NADPH to yield (R)-2,3-dihydroxy-isovalerate. The protein is Ketol-acid reductoisomerase (NADP(+)) of Methylococcus capsulatus (strain ATCC 33009 / NCIMB 11132 / Bath).